Reading from the N-terminus, the 1393-residue chain is DNA-directed RNA polymerase subunit beta' (1393 aa).

Positions 72, 74, 87, and 90 each coordinate Zn(2+). 3 residues coordinate Mg(2+): Asp-463, Asp-465, and Asp-467. Cys-812, Cys-887, Cys-894, and Cys-897 together coordinate Zn(2+).

The protein belongs to the RNA polymerase beta' chain family. The RNAP catalytic core consists of 2 alpha, 1 beta, 1 beta' and 1 omega subunit. When a sigma factor is associated with the core the holoenzyme is formed, which can initiate transcription. It depends on Mg(2+) as a cofactor. Zn(2+) is required as a cofactor.

It carries out the reaction RNA(n) + a ribonucleoside 5'-triphosphate = RNA(n+1) + diphosphate. DNA-dependent RNA polymerase catalyzes the transcription of DNA into RNA using the four ribonucleoside triphosphates as substrates. The protein is DNA-directed RNA polymerase subunit beta' of Chlamydia felis (strain Fe/C-56) (Chlamydophila felis).